Consider the following 739-residue polypeptide: NAD(P)H-quinone oxidoreductase subunit 5, chloroplastic (739 aa).

16 helical membrane-spanning segments follow: residues 9-29 (WVIPLLPLPVIMSMGFGLILI), 39-59 (IWAFPSVLLLSIAMVFSVQLS), 89-109 (IDPLTSIMLILITTVGILVLI), 125-145 (FVYISFFNTSMLGLVTSSNLI), 147-167 (IYFFWELVGMCSYLLIGFWFT), 185-205 (GDFGLLLGILGFFWITGSLEF), 219-239 (NGVNSLLTTLCAFLLFLGAVA), 258-278 (TPISALIQAATMVAAGIFLLA), 280-300 (LLPLFISLPLIMSFISLVGTI), 327-347 (LGYMMLALGIGSYQAALFHLI), 354-374 (ALLFLGSGSVIHSMEPLVGYS), 396-416 (TTFLWGTLSLCGIPPLACFWS), 425-445 (WLYSPFFGIIASFTAGLTAFY), 542-562 (LFPLLILLLFTLFIGFIGISF), 610-630 (TLAIFGLFIAYIFYGSAYSFF), and 719-739 (ISSYLFFFLCYVSLFLFFFLS).

The protein belongs to the complex I subunit 5 family. NDH is composed of at least 16 different subunits, 5 of which are encoded in the nucleus.

It is found in the plastid. The protein resides in the chloroplast thylakoid membrane. The enzyme catalyses a plastoquinone + NADH + (n+1) H(+)(in) = a plastoquinol + NAD(+) + n H(+)(out). It catalyses the reaction a plastoquinone + NADPH + (n+1) H(+)(in) = a plastoquinol + NADP(+) + n H(+)(out). Functionally, NDH shuttles electrons from NAD(P)H:plastoquinone, via FMN and iron-sulfur (Fe-S) centers, to quinones in the photosynthetic chain and possibly in a chloroplast respiratory chain. The immediate electron acceptor for the enzyme in this species is believed to be plastoquinone. Couples the redox reaction to proton translocation, and thus conserves the redox energy in a proton gradient. The polypeptide is NAD(P)H-quinone oxidoreductase subunit 5, chloroplastic (ndhF) (Triticum aestivum (Wheat)).